Consider the following 140-residue polypeptide: Large ribosomal subunit protein uL16 (140 aa).

The protein belongs to the universal ribosomal protein uL16 family. In terms of assembly, part of the 50S ribosomal subunit.

Its function is as follows. Binds 23S rRNA and is also seen to make contacts with the A and possibly P site tRNAs. This chain is Large ribosomal subunit protein uL16, found in Cytophaga hutchinsonii (strain ATCC 33406 / DSM 1761 / CIP 103989 / NBRC 15051 / NCIMB 9469 / D465).